The sequence spans 1271 residues: Chitin synthase 4 (1271 aa).

2 disordered regions span residues 1-45 and 58-117; these read MPPT…SFDH and PNHP…ERPS. The segment covering 21 to 30 has biased composition (polar residues); it reads APDTQESSPA. 2 helical membrane passes run 165-185 and 201-221; these read WWIR…LVHL and LAIF…IIFF. Asn407 carries an N-linked (GlcNAc...) asparagine glycan. The helical transmembrane segment at 473–493 threads the bilayer; sequence LLLAFSIILIATIASKFLAAL. N-linked (GlcNAc...) asparagine glycosylation is found at Asn713 and Asn836. 3 helical membrane-spanning segments follow: residues 867-887, 894-914, and 919-939; these read LLGT…VIVV, IPVI…LIFI, and FMLI…SVFL. Positions 999–1081 are disordered; sequence HSESPAPSEK…DKSFIRGSKP (83 aa). Residues 1027–1037 are compositionally biased toward polar residues; the sequence is RSPSFHSSASE. N-linked (GlcNAc...) asparagine glycosylation is found at Asn1055 and Asn1161. The 57-residue stretch at 1213–1269 folds into the DEK-C domain; that stretch reads EVQDEEVLDKLKTWLSKQDLMSVTKRQTREAIYTLFPNAGLQNRAGWLNEQIDKILS.

It belongs to the chitin synthase family.

The protein localises to the cell membrane. The catalysed reaction is [(1-&gt;4)-N-acetyl-beta-D-glucosaminyl](n) + UDP-N-acetyl-alpha-D-glucosamine = [(1-&gt;4)-N-acetyl-beta-D-glucosaminyl](n+1) + UDP + H(+). Functionally, polymerizes chitin, a structural polymer of the cell wall and septum, by transferring the sugar moiety of UDP-GlcNAc to the non-reducing end of the growing chitin polymer. Produces a large proportion of the chitin that is not deacetylated to chitosan. The polypeptide is Chitin synthase 4 (Cryptococcus neoformans var. grubii serotype A (strain H99 / ATCC 208821 / CBS 10515 / FGSC 9487) (Filobasidiella neoformans var. grubii)).